Reading from the N-terminus, the 116-residue chain is T cell receptor alpha variable 14/delta variable 4 (116 aa).

Residues 1–21 (MSLSSLLKVVTASLWLGPGIA) form the signal peptide. An Ig-like domain is found at 22-116 (QKITQTQPGM…SAMYFCAMRE (95 aa)). Residues Cys-43 and Cys-112 are joined by a disulfide bond. N-linked (GlcNAc...) asparagine glycosylation is present at Asn-78.

Alpha-beta TR is a heterodimer composed of an alpha and beta chain; disulfide-linked. The alpha-beta TR is associated with the transmembrane signaling CD3 coreceptor proteins to form the TR-CD3 (TcR or TCR). The assembly of alpha-beta TR heterodimers with CD3 occurs in the endoplasmic reticulum where a single alpha-beta TR heterodimer associates with one CD3D-CD3E heterodimer, one CD3G-CD3E heterodimer and one CD247 homodimer forming a stable octameric structure. CD3D-CD3E and CD3G-CD3E heterodimers preferentially associate with TR alpha and TR beta chains, respectively. The association of the CD247 homodimer is the last step of TcR assembly in the endoplasmic reticulum and is required for transport to the cell surface.

It localises to the cell membrane. Functionally, v region of the variable domain of T cell receptor (TR) alpha chain that participates in the antigen recognition. Alpha-beta T cell receptors are antigen specific receptors which are essential to the immune response and are present on the cell surface of T lymphocytes. Recognize peptide-major histocompatibility (MH) (pMH) complexes that are displayed by antigen presenting cells (APC), a prerequisite for efficient T cell adaptive immunity against pathogens. Binding of alpha-beta TR to pMH complex initiates TR-CD3 clustering on the cell surface and intracellular activation of LCK that phosphorylates the ITAM motifs of CD3G, CD3D, CD3E and CD247 enabling the recruitment of ZAP70. In turn ZAP70 phosphorylates LAT, which recruits numerous signaling molecules to form the LAT signalosome. The LAT signalosome propagates signal branching to three major signaling pathways, the calcium, the mitogen-activated protein kinase (MAPK) kinase and the nuclear factor NF-kappa-B (NF-kB) pathways, leading to the mobilization of transcription factors that are critical for gene expression and essential for T cell growth and differentiation. The T cell repertoire is generated in the thymus, by V-(D)-J rearrangement. This repertoire is then shaped by intrathymic selection events to generate a peripheral T cell pool of self-MH restricted, non-autoaggressive T cells. Post-thymic interaction of alpha-beta TR with the pMH complexes shapes TR structural and functional avidity. This chain is T cell receptor alpha variable 14/delta variable 4, found in Homo sapiens (Human).